Reading from the N-terminus, the 208-residue chain is Glycerol-3-phosphate acyltransferase (208 aa).

Helical transmembrane passes span 7–27, 63–83, 86–106, 123–143, 149–169, and 170–190; these read PNIH…GYLL, MMAA…ILVA, AGMS…GHCF, GVMA…WLVV, ISSL…FLIH, and PEIP…VIFY.

It belongs to the PlsY family. As to quaternary structure, probably interacts with PlsX.

It is found in the cell inner membrane. It carries out the reaction an acyl phosphate + sn-glycerol 3-phosphate = a 1-acyl-sn-glycero-3-phosphate + phosphate. Its pathway is lipid metabolism; phospholipid metabolism. In terms of biological role, catalyzes the transfer of an acyl group from acyl-phosphate (acyl-PO(4)) to glycerol-3-phosphate (G3P) to form lysophosphatidic acid (LPA). This enzyme utilizes acyl-phosphate as fatty acyl donor, but not acyl-CoA or acyl-ACP. The protein is Glycerol-3-phosphate acyltransferase of Wolinella succinogenes (strain ATCC 29543 / DSM 1740 / CCUG 13145 / JCM 31913 / LMG 7466 / NCTC 11488 / FDC 602W) (Vibrio succinogenes).